The sequence spans 301 residues: Ribonuclease Z (301 aa).

Zn(2+) contacts are provided by H61, H63, D65, H66, H140, D211, and H269. D65 acts as the Proton acceptor in catalysis.

This sequence belongs to the RNase Z family. In terms of assembly, homodimer. It depends on Zn(2+) as a cofactor.

The catalysed reaction is Endonucleolytic cleavage of RNA, removing extra 3' nucleotides from tRNA precursor, generating 3' termini of tRNAs. A 3'-hydroxy group is left at the tRNA terminus and a 5'-phosphoryl group is left at the trailer molecule.. Its function is as follows. Zinc phosphodiesterase, which displays some tRNA 3'-processing endonuclease activity. Probably involved in tRNA maturation, by removing a 3'-trailer from precursor tRNA. This is Ribonuclease Z from Bradyrhizobium sp. (strain ORS 278).